The following is a 97-amino-acid chain: uncharacterized protein (97 aa).

Residues 1–20 (MAKEQTDRTTLDLFAHERRP) are compositionally biased toward basic and acidic residues. The interval 1-30 (MAKEQTDRTTLDLFAHERRPGRPKTNPLSR) is disordered.

This is an uncharacterized protein from Escherichia coli O157:H7.